The primary structure comprises 1230 residues: Ubiquitin carboxyl-terminal hydrolase 15 (1230 aa).

Positions 39 to 179 (EDSFTWNIPD…EGTLNITAYV (141 aa)) constitute an MATH domain. One can recognise a USP domain in the interval 205 to 536 (VGFRNQGATC…SAYMLVYIRQ (332 aa)). Residue Cys-214 is the Nucleophile of the active site. His-465 serves as the catalytic Proton acceptor.

The protein belongs to the peptidase C19 family. As to quaternary structure, interacts with PEX6; promoting association with the PEX1-PEX6 ATPase complex.

The protein localises to the cytoplasm. Its subcellular location is the cytosol. It localises to the peroxisome. The catalysed reaction is Thiol-dependent hydrolysis of ester, thioester, amide, peptide and isopeptide bonds formed by the C-terminal Gly of ubiquitin (a 76-residue protein attached to proteins as an intracellular targeting signal).. Deubiquitinase involved in peroxisome import by mediating deubiquitination of the peroxisomal import receptor PEX5. Catalyzes deubiquitination of both monoubiquitiated and polyubiquitinated forms of PEX5 following its retrotranslocation into the cytosol, resetting PEX5 for a subsequent import cycle. This Saccharomyces cerevisiae (strain ATCC 204508 / S288c) (Baker's yeast) protein is Ubiquitin carboxyl-terminal hydrolase 15.